The sequence spans 506 residues: Alpha-ketoglutarate-dependent dioxygenase FTO (506 aa).

Residue T4 is modified to Phosphothreonine. The segment at 32-326 (TPKDDEFYQQ…SSTHRVAECS (295 aa)) is fe2OG dioxygenase domain. R96 and Y108 together coordinate substrate. N204 is a 2-oxoglutarate binding site. A loop L1; predicted to block binding of double-stranded DNA or RNA region spans residues 212–223 (PYLKEEPYFGMG). K215 carries the N6-acetyllysine modification. Residues H230 and D232 each contribute to the Fe cation site. 230–233 (HHDE) contributes to the substrate binding site. Y294 contacts 2-oxoglutarate. Fe cation is bound at residue H306. 2-oxoglutarate is bound by residues 315 to 317 (RFS), T319, and R321.

This sequence belongs to the fto family. As to quaternary structure, monomer. May also exist as homodimer. Fe(2+) is required as a cofactor.

It localises to the nucleus. The protein localises to the nucleus speckle. The protein resides in the cytoplasm. The enzyme catalyses a 5'-end (N(7)-methyl 5'-triphosphoguanosine)-(N(6),2'-O-dimethyladenosine) in mRNA + 2-oxoglutarate + O2 = a 5'-end (N(7)-methyl 5'-triphosphoguanosine)-(2'-O-methyladenosine) in mRNA + formaldehyde + succinate + CO2. It catalyses the reaction an N(6)-methyladenosine in mRNA + 2-oxoglutarate + O2 = an adenosine in mRNA + formaldehyde + succinate + CO2. It carries out the reaction N(6)-methyladenosine in U6 snRNA + 2-oxoglutarate + O2 = adenosine in U6 snRNA + formaldehyde + succinate + CO2. The catalysed reaction is a 5'-end (N(7)-methyl 5'-triphosphoguanosine)-(N(6),2'-O-dimethyladenosine) in U6 snRNA + 2-oxoglutarate + O2 = a 5'-end (N(7)-methyl 5'-triphosphoguanosine)-(2'-O-methyladenosine) in U6 snRNA + formaldehyde + succinate + CO2. The enzyme catalyses an N(1)-methyladenosine in tRNA + 2-oxoglutarate + O2 = an adenosine in tRNA + formaldehyde + succinate + CO2. Functionally, RNA demethylase that mediates oxidative demethylation of different RNA species, such as mRNAs, tRNAs and snRNAs, and acts as a regulator of fat mass, adipogenesis and energy homeostasis. Specifically demethylates N(6)-methyladenosine (m6A) RNA, the most prevalent internal modification of messenger RNA (mRNA) in higher eukaryotes. M6A demethylation by FTO affects mRNA expression and stability. Also able to demethylate m6A in U6 small nuclear RNA (snRNA). Mediates demethylation of N(6),2'-O-dimethyladenosine cap (m6A(m)), by demethylating the N(6)-methyladenosine at the second transcribed position of mRNAs and U6 snRNA. Demethylation of m6A(m) in the 5'-cap by FTO affects mRNA stability by promoting susceptibility to decapping. Also acts as a tRNA demethylase by removing N(1)-methyladenine from various tRNAs. Has no activity towards 1-methylguanine. Has no detectable activity towards double-stranded DNA. Also able to repair alkylated DNA and RNA by oxidative demethylation: demethylates single-stranded RNA containing 3-methyluracil, single-stranded DNA containing 3-methylthymine and has low demethylase activity towards single-stranded DNA containing 1-methyladenine or 3-methylcytosine. Ability to repair alkylated DNA and RNA is however unsure in vivo. Involved in the regulation of fat mass, adipogenesis and body weight, thereby contributing to the regulation of body size and body fat accumulation. Involved in the regulation of thermogenesis and the control of adipocyte differentiation into brown or white fat cells. Regulates activity of the dopaminergic midbrain circuitry via its ability to demethylate m6A in mRNAs. Plays an oncogenic role in a number of acute myeloid leukemias by enhancing leukemic oncogene-mediated cell transformation: acts by mediating m6A demethylation of target transcripts such as MYC, CEBPA, ASB2 and RARA, leading to promote their expression. The protein is Alpha-ketoglutarate-dependent dioxygenase FTO (FTO) of Canis lupus familiaris (Dog).